The sequence spans 415 residues: Serine hydroxymethyltransferase (415 aa).

(6S)-5,6,7,8-tetrahydrofolate is bound by residues leucine 119 and 123–125; that span reads GHL. Position 228 is an N6-(pyridoxal phosphate)lysine (lysine 228).

This sequence belongs to the SHMT family. In terms of assembly, homodimer. Requires pyridoxal 5'-phosphate as cofactor.

The protein resides in the cytoplasm. It carries out the reaction (6R)-5,10-methylene-5,6,7,8-tetrahydrofolate + glycine + H2O = (6S)-5,6,7,8-tetrahydrofolate + L-serine. The protein operates within one-carbon metabolism; tetrahydrofolate interconversion. It participates in amino-acid biosynthesis; glycine biosynthesis; glycine from L-serine: step 1/1. Functionally, catalyzes the reversible interconversion of serine and glycine with tetrahydrofolate (THF) serving as the one-carbon carrier. This reaction serves as the major source of one-carbon groups required for the biosynthesis of purines, thymidylate, methionine, and other important biomolecules. Also exhibits THF-independent aldolase activity toward beta-hydroxyamino acids, producing glycine and aldehydes, via a retro-aldol mechanism. The protein is Serine hydroxymethyltransferase of Coprothermobacter proteolyticus (strain ATCC 35245 / DSM 5265 / OCM 4 / BT).